Reading from the N-terminus, the 442-residue chain is GDP-L-galactose phosphorylase 1 (442 aa).

His238 serves as the catalytic Tele-GMP-histidine intermediate.

This sequence belongs to the GDPGP1 family. In terms of assembly, interacts with TLP1. Expressed in leaves, stems, roots, flowers and siliques. Highest expression in green tissues.

It localises to the cytoplasm. The protein resides in the nucleus. It catalyses the reaction GDP-beta-L-galactose + phosphate = beta-L-galactose 1-phosphate + GDP + H(+). The protein operates within cofactor biosynthesis; L-ascorbate biosynthesis via GDP-alpha-D-mannose pathway; L-ascorbate from GDP-alpha-D-mannose: step 2/5. With respect to regulation, not inhibited by dithiothreitol, N-ethylmaleimide, phenylmethane sulfonyl fluoride, ascorbate, L-galactose and L-galactonolactone. Its function is as follows. Catalyzes a reaction of the Smirnoff-Wheeler pathway, the major route to ascorbate biosynthesis in plants. Acts as a phosphorylase rather than as a transferase. Uses preferentially GDP-L-galactose and GDP-D-glucose as substrates. Lower activity with GDP-L-fucose, very low activity with GDP-D-mannose, and no activity with UDP-D-glucose, UDP-D-galactose or ADP-D-glucose. Highly specific for inorganic phosphate as the guanylyl acceptor. This is GDP-L-galactose phosphorylase 1 (VTC2) from Arabidopsis thaliana (Mouse-ear cress).